Consider the following 450-residue polypeptide: UDP-N-acetylmuramoylalanine--D-glutamate ligase (450 aa).

119-125 (GSNGKTT) contributes to the ATP binding site.

This sequence belongs to the MurCDEF family.

It is found in the cytoplasm. It carries out the reaction UDP-N-acetyl-alpha-D-muramoyl-L-alanine + D-glutamate + ATP = UDP-N-acetyl-alpha-D-muramoyl-L-alanyl-D-glutamate + ADP + phosphate + H(+). The protein operates within cell wall biogenesis; peptidoglycan biosynthesis. Its function is as follows. Cell wall formation. Catalyzes the addition of glutamate to the nucleotide precursor UDP-N-acetylmuramoyl-L-alanine (UMA). The polypeptide is UDP-N-acetylmuramoylalanine--D-glutamate ligase (Streptococcus pneumoniae (strain CGSP14)).